A 388-amino-acid polypeptide reads, in one-letter code: Succinate--CoA ligase [ADP-forming] subunit beta (388 aa).

One can recognise an ATP-grasp domain in the interval 9 to 244 (KEILRKYGVT…LDEEDPAEIE (236 aa)). ATP is bound by residues Lys-46, 53 to 55 (GRG), Glu-99, Ala-102, and Glu-107. The Mg(2+) site is built by Asn-199 and Asp-213. Substrate-binding positions include Asn-264 and 321-323 (GIM).

It belongs to the succinate/malate CoA ligase beta subunit family. As to quaternary structure, heterotetramer of two alpha and two beta subunits. Requires Mg(2+) as cofactor.

It carries out the reaction succinate + ATP + CoA = succinyl-CoA + ADP + phosphate. The enzyme catalyses GTP + succinate + CoA = succinyl-CoA + GDP + phosphate. It functions in the pathway carbohydrate metabolism; tricarboxylic acid cycle; succinate from succinyl-CoA (ligase route): step 1/1. Functionally, succinyl-CoA synthetase functions in the citric acid cycle (TCA), coupling the hydrolysis of succinyl-CoA to the synthesis of either ATP or GTP and thus represents the only step of substrate-level phosphorylation in the TCA. The beta subunit provides nucleotide specificity of the enzyme and binds the substrate succinate, while the binding sites for coenzyme A and phosphate are found in the alpha subunit. In Herminiimonas arsenicoxydans, this protein is Succinate--CoA ligase [ADP-forming] subunit beta.